The primary structure comprises 481 residues: Eukaryotic translation initiation factor 3 subunit L (481 aa).

The segment at 1 to 22 (MSVDARTAYPGSRPPANMQDES) is disordered. A PCI domain is found at 262-457 (DAIRTFSHIL…DLDYAIEGNL (196 aa)).

This sequence belongs to the eIF-3 subunit L family. As to quaternary structure, component of the eukaryotic translation initiation factor 3 (eIF-3) complex.

It localises to the cytoplasm. Its function is as follows. Component of the eukaryotic translation initiation factor 3 (eIF-3) complex, which is involved in protein synthesis of a specialized repertoire of mRNAs and, together with other initiation factors, stimulates binding of mRNA and methionyl-tRNAi to the 40S ribosome. The eIF-3 complex specifically targets and initiates translation of a subset of mRNAs involved in cell proliferation. This chain is Eukaryotic translation initiation factor 3 subunit L, found in Coccidioides immitis (strain RS) (Valley fever fungus).